Here is a 335-residue protein sequence, read N- to C-terminus: Aspartate--ammonia ligase (335 aa).

The protein belongs to the class-II aminoacyl-tRNA synthetase family. AsnA subfamily.

The protein resides in the cytoplasm. The enzyme catalyses L-aspartate + NH4(+) + ATP = L-asparagine + AMP + diphosphate + H(+). Its pathway is amino-acid biosynthesis; L-asparagine biosynthesis; L-asparagine from L-aspartate (ammonia route): step 1/1. The polypeptide is Aspartate--ammonia ligase (Levilactobacillus brevis (strain ATCC 367 / BCRC 12310 / CIP 105137 / JCM 1170 / LMG 11437 / NCIMB 947 / NCTC 947) (Lactobacillus brevis)).